Consider the following 370-residue polypeptide: Protein maelstrom 2 (370 aa).

Residues 2–68 (AQNKPNAFMA…VLERESKTER (67 aa)) constitute a DNA-binding region (HMG box).

It belongs to the maelstrom family.

Its subcellular location is the cytoplasm. The protein resides in the nucleus. In terms of biological role, involved both in the piRNA and miRNA metabolic processes. As a component of the meiotic nuage, plays a central role during oogenesis by repressing transposable elements and preventing their mobilization, which is essential for the germline integrity. Repression of transposable elements is mediated via the piRNA metabolic process, which mediates the repression of transposable elements during meiosis by forming complexes composed of piRNAs and Piwi proteins and governs the repression of transposons. As a nuclear component, it is required for proper differentiation in the germline stem cell (GSC) lineage by repressing microRNA-7 (miR-7), thereby acting as an indirect regulator of bag-of-marbles (Bam). Acts by binding to the promoter of miR-7 gene and repressing its expression; miR-7 repression alleviates the Bam repression by miR-7, thereby allowing differentiation in the germline stem cell (GSC) lineage. In Drosophila pseudoobscura pseudoobscura (Fruit fly), this protein is Protein maelstrom 2 (mael2).